Consider the following 299-residue polypeptide: Diaminopimelate epimerase (299 aa).

The substrate site is built by Asn13, Gln46, and Asn66. The active-site Proton donor is the Cys75. Substrate contacts are provided by residues 76–77 (GN), Asn166, Asn199, and 217–218 (ER). Cys226 functions as the Proton acceptor in the catalytic mechanism. 227–228 (GT) contacts substrate.

The protein belongs to the diaminopimelate epimerase family. As to quaternary structure, homodimer.

It localises to the cytoplasm. The catalysed reaction is (2S,6S)-2,6-diaminopimelate = meso-2,6-diaminopimelate. Its pathway is amino-acid biosynthesis; L-lysine biosynthesis via DAP pathway; DL-2,6-diaminopimelate from LL-2,6-diaminopimelate: step 1/1. In terms of biological role, catalyzes the stereoinversion of LL-2,6-diaminopimelate (L,L-DAP) to meso-diaminopimelate (meso-DAP), a precursor of L-lysine and an essential component of the bacterial peptidoglycan. This is Diaminopimelate epimerase from Paraburkholderia phytofirmans (strain DSM 17436 / LMG 22146 / PsJN) (Burkholderia phytofirmans).